Consider the following 448-residue polypeptide: MAKKLFIKTHGCQMNEYDSARMADLLGESHALELTDDERDADVILLNTCSIREKAQEKVFHQLGRWKKLKAANPDLVIGVGGCVASQEGEHIKKRAPHVDMVFGPQTLHRLPTMLDSRQGAETISMVDVTFPEIEKFDHLPKPTSDGATAFVSVMEGCSKYCTFCVVPYTRGEEVSRPFESVMEEVIHLADQGVREINLLGQNVNAYRGENQLGDEIDLAELIGCVAAVEGIDRIRFTTSHPVEFSDSLIEAYGEIPELVSHLHLPVQAGSDRILAAMKRGHTVEEYVDKLERIRALRPDISFSSDFIIGFPGETEEDFMDTMNLIQRIGFDASFSFVYSPRPGTPAANLEDETPEATKKQRLAILQERLNQQTMQISRRMVGNTERILVTGFSPKDPGQLSGRTENNRVVNFRAPNPTELIGYFVDVEITEALPNSLRGDLASPARY.

The region spanning 3–120 (KKLFIKTHGC…LPTMLDSRQG (118 aa)) is the MTTase N-terminal domain. 6 residues coordinate [4Fe-4S] cluster: Cys12, Cys49, Cys83, Cys158, Cys162, and Cys165. The 233-residue stretch at 144 to 376 (TSDGATAFVS…QERLNQQTMQ (233 aa)) folds into the Radical SAM core domain. Residues 379 to 444 (RRMVGNTERI…PNSLRGDLAS (66 aa)) form the TRAM domain.

The protein belongs to the methylthiotransferase family. MiaB subfamily. As to quaternary structure, monomer. [4Fe-4S] cluster serves as cofactor.

It localises to the cytoplasm. The enzyme catalyses N(6)-dimethylallyladenosine(37) in tRNA + (sulfur carrier)-SH + AH2 + 2 S-adenosyl-L-methionine = 2-methylsulfanyl-N(6)-dimethylallyladenosine(37) in tRNA + (sulfur carrier)-H + 5'-deoxyadenosine + L-methionine + A + S-adenosyl-L-homocysteine + 2 H(+). Functionally, catalyzes the methylthiolation of N6-(dimethylallyl)adenosine (i(6)A), leading to the formation of 2-methylthio-N6-(dimethylallyl)adenosine (ms(2)i(6)A) at position 37 in tRNAs that read codons beginning with uridine. This Chromohalobacter salexigens (strain ATCC BAA-138 / DSM 3043 / CIP 106854 / NCIMB 13768 / 1H11) protein is tRNA-2-methylthio-N(6)-dimethylallyladenosine synthase.